A 566-amino-acid chain; its full sequence is Mediator of RNA polymerase II transcription subunit 1 (566 aa).

At S155 the chain carries Phosphoserine. Positions 361 to 425 (TPSSNSNSSE…TNKSKRPSIT (65 aa)) are disordered. A compositionally biased stretch (basic residues) spans 410-421 (RRRRSSTNKSKR). Position 423 is a phosphoserine (S423).

This sequence belongs to the Mediator complex subunit 1 family. As to quaternary structure, component of the Mediator complex, which is composed of at least 21 subunits that form three structurally distinct submodules. The Mediator head module contains MED6, MED8, MED11, SRB4/MED17, SRB5/MED18, ROX3/MED19, SRB2/MED20 and SRB6/MED22, the middle module contains MED1, MED4, NUT1/MED5, MED7, CSE2/MED9, NUT2/MED10, SRB7/MED21 and SOH1/MED31, and the tail module contains MED2, PGD1/MED3, RGR1/MED14, GAL11/MED15 and SIN4/MED16. The head and the middle modules interact directly with RNA polymerase II, whereas the elongated tail module interacts with gene-specific regulatory proteins. MED1 interacts directly with MED4 and MED7.

It is found in the nucleus. Functionally, component of the Mediator complex, a coactivator involved in the regulated transcription of nearly all RNA polymerase II-dependent genes. Mediator functions as a bridge to convey information from gene-specific regulatory proteins to the basal RNA polymerase II transcription machinery. The Mediator complex, having a compact conformation in its free form, is recruited to promoters by direct interactions with regulatory proteins and serves for the assembly of a functional preinitiation complex with RNA polymerase II and the general transcription factors. The Mediator complex unfolds to an extended conformation and partially surrounds RNA polymerase II, specifically interacting with the unphosphorylated form of the C-terminal domain (CTD) of RNA polymerase II. The Mediator complex dissociates from the RNA polymerase II holoenzyme and stays at the promoter when transcriptional elongation begins. The polypeptide is Mediator of RNA polymerase II transcription subunit 1 (MED1) (Saccharomyces cerevisiae (strain ATCC 204508 / S288c) (Baker's yeast)).